The chain runs to 337 residues: Lipoyl synthase (337 aa).

7 residues coordinate [4Fe-4S] cluster: cysteine 81, cysteine 86, cysteine 92, cysteine 107, cysteine 111, cysteine 114, and serine 323. Residues 93 to 312 enclose the Radical SAM core domain; sequence FSHGTATFMI…EDYGNALGFS (220 aa).

It belongs to the radical SAM superfamily. Lipoyl synthase family. [4Fe-4S] cluster serves as cofactor.

Its subcellular location is the cytoplasm. The enzyme catalyses [[Fe-S] cluster scaffold protein carrying a second [4Fe-4S](2+) cluster] + N(6)-octanoyl-L-lysyl-[protein] + 2 oxidized [2Fe-2S]-[ferredoxin] + 2 S-adenosyl-L-methionine + 4 H(+) = [[Fe-S] cluster scaffold protein] + N(6)-[(R)-dihydrolipoyl]-L-lysyl-[protein] + 4 Fe(3+) + 2 hydrogen sulfide + 2 5'-deoxyadenosine + 2 L-methionine + 2 reduced [2Fe-2S]-[ferredoxin]. It participates in protein modification; protein lipoylation via endogenous pathway; protein N(6)-(lipoyl)lysine from octanoyl-[acyl-carrier-protein]: step 2/2. Functionally, catalyzes the radical-mediated insertion of two sulfur atoms into the C-6 and C-8 positions of the octanoyl moiety bound to the lipoyl domains of lipoate-dependent enzymes, thereby converting the octanoylated domains into lipoylated derivatives. The sequence is that of Lipoyl synthase from Xanthomonas campestris pv. campestris (strain B100).